The following is a 343-amino-acid chain: UDP-3-O-acylglucosamine N-acyltransferase 2 (343 aa).

The active-site Proton acceptor is the His-251.

This sequence belongs to the transferase hexapeptide repeat family. LpxD subfamily. As to quaternary structure, homotrimer.

It carries out the reaction a UDP-3-O-[(3R)-3-hydroxyacyl]-alpha-D-glucosamine + a (3R)-hydroxyacyl-[ACP] = a UDP-2-N,3-O-bis[(3R)-3-hydroxyacyl]-alpha-D-glucosamine + holo-[ACP] + H(+). The protein operates within bacterial outer membrane biogenesis; LPS lipid A biosynthesis. Its function is as follows. Catalyzes the N-acylation of UDP-3-O-acylglucosamine using 3-hydroxyacyl-ACP as the acyl donor. Is involved in the biosynthesis of lipid A, a phosphorylated glycolipid that anchors the lipopolysaccharide to the outer membrane of the cell. This is UDP-3-O-acylglucosamine N-acyltransferase 2 from Legionella pneumophila (strain Paris).